We begin with the raw amino-acid sequence, 336 residues long: F-box protein At5g50450 (336 aa).

Positions 19-70 constitute an F-box domain; that stretch reads NNHFEDLHDDLIISILRKLATSASSPSDFLTVLSTCKRLNRLGLHPLVLSKA. H263, C266, C279, C282, C288, C292, H301, and C305 together coordinate Zn(2+). Residues 263–305 form an MYND-type; atypical zinc finger; that stretch reads HGGCGRPETRAHEFRRCSVCGKVNYCSRGCQALDWRAKHKVEC.

The polypeptide is F-box protein At5g50450 (Arabidopsis thaliana (Mouse-ear cress)).